Consider the following 20-residue polypeptide: Short cationic peptide-4d (20 aa).

Position 20 is a glutamic acid 1-amide (Glu-20).

As to expression, expressed by the venom gland.

Its subcellular location is the secreted. This is Short cationic peptide-4d from Cupiennius salei (American wandering spider).